The chain runs to 54 residues: ATP synthase F(0) complex subunit 8 (54 aa).

Residues 9 to 29 (WFMILFFSWVIFLTIIPTKII) form a helical membrane-spanning segment. The tract at residues 35–54 (NDPTQVDAKEHKNDTWNWPW) is disordered.

This sequence belongs to the ATPase protein 8 family. As to quaternary structure, component of the ATP synthase complex composed at least of ATP5F1A/subunit alpha, ATP5F1B/subunit beta, ATP5MC1/subunit c (homooctomer), MT-ATP6/subunit a, MT-ATP8/subunit 8, ATP5ME/subunit e, ATP5MF/subunit f, ATP5MG/subunit g, ATP5MK/subunit k, ATP5MJ/subunit j, ATP5F1C/subunit gamma, ATP5F1D/subunit delta, ATP5F1E/subunit epsilon, ATP5PF/subunit F6, ATP5PB/subunit b, ATP5PD/subunit d, ATP5PO/subunit OSCP. ATP synthase complex consists of a soluble F(1) head domain (subunits alpha(3) and beta(3)) - the catalytic core - and a membrane F(0) domain - the membrane proton channel (subunits c, a, 8, e, f, g, k and j). These two domains are linked by a central stalk (subunits gamma, delta, and epsilon) rotating inside the F1 region and a stationary peripheral stalk (subunits F6, b, d, and OSCP).

It is found in the mitochondrion membrane. Functionally, subunit 8, of the mitochondrial membrane ATP synthase complex (F(1)F(0) ATP synthase or Complex V) that produces ATP from ADP in the presence of a proton gradient across the membrane which is generated by electron transport complexes of the respiratory chain. ATP synthase complex consist of a soluble F(1) head domain - the catalytic core - and a membrane F(1) domain - the membrane proton channel. These two domains are linked by a central stalk rotating inside the F(1) region and a stationary peripheral stalk. During catalysis, ATP synthesis in the catalytic domain of F(1) is coupled via a rotary mechanism of the central stalk subunits to proton translocation. In vivo, can only synthesize ATP although its ATP hydrolase activity can be activated artificially in vitro. Part of the complex F(0) domain. This chain is ATP synthase F(0) complex subunit 8, found in Danio rerio (Zebrafish).